The sequence spans 315 residues: Methionyl-tRNA formyltransferase (315 aa).

113–116 (SILP) is a binding site for (6S)-5,6,7,8-tetrahydrofolate.

This sequence belongs to the Fmt family.

It catalyses the reaction L-methionyl-tRNA(fMet) + (6R)-10-formyltetrahydrofolate = N-formyl-L-methionyl-tRNA(fMet) + (6S)-5,6,7,8-tetrahydrofolate + H(+). Its function is as follows. Attaches a formyl group to the free amino group of methionyl-tRNA(fMet). The formyl group appears to play a dual role in the initiator identity of N-formylmethionyl-tRNA by promoting its recognition by IF2 and preventing the misappropriation of this tRNA by the elongation apparatus. The chain is Methionyl-tRNA formyltransferase from Vibrio cholerae serotype O1 (strain M66-2).